We begin with the raw amino-acid sequence, 225 residues long: Cytidylate kinase (225 aa).

10–18 (GPASSGKST) is an ATP binding site.

This sequence belongs to the cytidylate kinase family. Type 1 subfamily.

The protein localises to the cytoplasm. The enzyme catalyses CMP + ATP = CDP + ADP. It carries out the reaction dCMP + ATP = dCDP + ADP. This is Cytidylate kinase from Streptococcus suis (strain 98HAH33).